The sequence spans 907 residues: DNA (cytosine-5)-methyltransferase CMT3 (907 aa).

The span at 1-15 shows a compositional bias: low complexity; sequence MAPSSPSSAAAPTRT. Positions 1–154 are disordered; it reads MAPSSPSSAA…RNAATRRPDE (154 aa). The segment covering 30–63 has biased composition (basic and acidic residues); the sequence is ATDEPSTKRTRRPKAETKPRKKKDEVKEEEKPPM. The segment covering 64–89 has biased composition (acidic residues); the sequence is EDDACGEEPDAEEMALGEEAEAEEAE. 2 stretches are compositionally biased toward basic and acidic residues: residues 115–124 and 131–140; these read HGSDGDHDPE and PAKEARDKWP. The 126-residue stretch at 172-297 folds into the BAH domain; that stretch reads TLYCLHDDVY…VAYSTFANIP (126 aa). Positions 303 to 323 are disordered; sequence SGSDTASDISSDDVDSSKGKV. Positions 335–868 constitute an SAM-dependent MTase C5-type domain; the sequence is ATLLDLYSGC…YSLGLAYQRE (534 aa). The region spanning 437-500 is the Chromo domain; that stretch reads FVVEKLAGIC…EGYRRKILPL (64 aa). The active site involves Cys-513.

It belongs to the class I-like SAM-binding methyltransferase superfamily. C5-methyltransferase family.

The protein localises to the nucleus. The enzyme catalyses a 2'-deoxycytidine in DNA + S-adenosyl-L-methionine = a 5-methyl-2'-deoxycytidine in DNA + S-adenosyl-L-homocysteine + H(+). Functionally, involved in CpXpG DNA methylation. Plays a critical role in the maintenance of CpXpG DNA methylation and suppression of a wide spectrum of transposable element (TE) activities. Required for proper plant development in reproductive stage. The protein is DNA (cytosine-5)-methyltransferase CMT3 of Oryza sativa subsp. japonica (Rice).